An 88-amino-acid chain; its full sequence is Gene 86 protein (88 aa).

Residues 64–88 are disordered; that stretch reads WRGNPSAYDDEVGDLEGFETQHSDY. The segment covering 71–80 has biased composition (acidic residues); that stretch reads YDDEVGDLEG.

In Mycobacterium (Mycobacteriophage L5), this protein is Gene 86 protein (86).